Reading from the N-terminus, the 350-residue chain is Methionine import ATP-binding protein MetN (350 aa).

The 240-residue stretch at 2-241 (IQIKNLKKEY…PQAPVTRSFV (240 aa)) folds into the ABC transporter domain. 38–45 (GHSGAGKS) is a binding site for ATP.

The protein belongs to the ABC transporter superfamily. Methionine importer (TC 3.A.1.24) family. The complex is composed of two ATP-binding proteins (MetN), two transmembrane proteins (MetI) and a solute-binding protein (MetQ).

The protein localises to the cell inner membrane. It carries out the reaction L-methionine(out) + ATP + H2O = L-methionine(in) + ADP + phosphate + H(+). It catalyses the reaction D-methionine(out) + ATP + H2O = D-methionine(in) + ADP + phosphate + H(+). In terms of biological role, part of the ABC transporter complex MetNIQ involved in methionine import. Responsible for energy coupling to the transport system. This is Methionine import ATP-binding protein MetN from Francisella tularensis subsp. tularensis (strain SCHU S4 / Schu 4).